The following is a 452-amino-acid chain: Plasminogen-binding protein PgbA (452 aa).

Residues 265–452 are disordered; sequence QEAIKEPKKA…RRKALEAGKK (188 aa). Basic and acidic residues-rich tracts occupy residues 284-310 and 317-373; these read LEEKNYQKAERKLDAKEERRYLRDERK and KAME…KEPS. Polar residues predominate over residues 374 to 391; it reads DGNNATQQGEKQNAPKEN. Residues 392 to 452 are compositionally biased toward basic and acidic residues; the sequence is NAQKEENKPN…RRKALEAGKK (61 aa).

The protein localises to the cell surface. In terms of biological role, binds plasminogen, specifically, and in a concentration and lysine-dependent manner. Plasminogen is the precursor of plasmin, a serine protease that cleaves fibrin, fibronectin, laminin and vitronectin. Acquisition of plasminogen/plasmin could enable H.pylori to degrade host components. The sequence is that of Plasminogen-binding protein PgbA (pgbA) from Helicobacter pylori (strain ATCC 700392 / 26695) (Campylobacter pylori).